The primary structure comprises 292 residues: Nanos homolog 1 (292 aa).

Disordered stretches follow at residues 1 to 41 (MEAF…QPFS) and 68 to 121 (GGNG…SRGR). Residues 40–56 (FSSWNDYLGLATLITKA) form an essential for its translational repressor activity region. The span at 76–87 (PPSSSSSSCCSP) shows a compositional bias: low complexity. Residues 104–115 (DYDEDDDDDSDE) are compositionally biased toward acidic residues. A Nanos-type zinc finger spans residues 213–267 (VCVFCRNNKEAMALYTTHILKGPDGRVLCPVLRRYTCPLCGASGDNAHTIKYCPL). The Zn(2+) site is built by Cys214, Cys217, His230, Cys241, Cys249, Cys252, His260, and Cys265. 2 consecutive short sequence motifs (C2HC) follow at residues 214–241 (CVFC…RVLC) and 249–265 (CPLC…IKYC). The disordered stretch occupies residues 268 to 292 (SKVPPPPARPPPRSARDGPPGKKLR). Over residues 269-280 (KVPPPPARPPPR) the composition is skewed to pro residues. A compositionally biased stretch (basic and acidic residues) spans 281–292 (SARDGPPGKKLR).

The protein belongs to the nanos family. In terms of assembly, interacts with PUM2, SNAPIN and CTNNB1. Interacts (via N-terminal region) with CTNND1. Interacts with DDX20 (via N-terminal region). In terms of tissue distribution, testis and ovary (at protein level). Predominantly expressed in testis. Specifically expressed during germline development. In adult tissues, it is mainly expressed in spermatogonia, the stem cells of the germline. Also expressed during meiosis in spermatocytes. Not present in late, post-meiotic stage germ cells. Expressed in fetal ovaries, while it is weakly or not expressed in mature postmeiotic oocytes, suggesting that it may be expressed in premeiotic female germ cells. Expressed at high levels only in the E-cadherin deficient cell lines. Highly expressed in lung carcinomas and mostly detected in invasive tumor cells and its expression correlates with tumor aggressiveness.

It is found in the cytoplasm. It localises to the perinuclear region. Functionally, may act as a translational repressor which regulates translation of specific mRNAs by forming a complex with PUM2 that associates with the 3'-UTR of mRNA targets. Capable of interfering with the proadhesive and anti-invasive functions of E-cadherin. Up-regulates the production of MMP14 to promote tumor cell invasion. This is Nanos homolog 1 (NANOS1) from Homo sapiens (Human).